A 104-amino-acid chain; its full sequence is Large ribosomal subunit protein uL24 (104 aa).

It belongs to the universal ribosomal protein uL24 family. As to quaternary structure, part of the 50S ribosomal subunit.

Its function is as follows. One of two assembly initiator proteins, it binds directly to the 5'-end of the 23S rRNA, where it nucleates assembly of the 50S subunit. One of the proteins that surrounds the polypeptide exit tunnel on the outside of the subunit. The polypeptide is Large ribosomal subunit protein uL24 (Shewanella woodyi (strain ATCC 51908 / MS32)).